Consider the following 72-residue polypeptide: DNA-directed RNA polymerase subunit omega (72 aa).

Belongs to the RNA polymerase subunit omega family. The RNAP catalytic core consists of 2 alpha, 1 beta, 1 beta' and 1 omega subunit. When a sigma factor is associated with the core the holoenzyme is formed, which can initiate transcription.

It carries out the reaction RNA(n) + a ribonucleoside 5'-triphosphate = RNA(n+1) + diphosphate. Promotes RNA polymerase assembly. Latches the N- and C-terminal regions of the beta' subunit thereby facilitating its interaction with the beta and alpha subunits. In Francisella tularensis subsp. holarctica (strain LVS), this protein is DNA-directed RNA polymerase subunit omega.